Consider the following 547-residue polypeptide: uncharacterized protein (547 aa).

Topologically, residues Met-1–Ser-21 are extracellular. A helical transmembrane segment spans residues Phe-22–Ala-42. Residues Pro-43–Lys-58 are Cytoplasmic-facing. The chain crosses the membrane as a helical span at residues Leu-59–Asp-79. The Extracellular segment spans residues Arg-80–Lys-83. Residues Leu-84–Tyr-104 form a helical membrane-spanning segment. Over Lys-105 to Ser-110 the chain is Cytoplasmic. Residues Thr-111 to Ala-131 traverse the membrane as a helical segment. Topologically, residues Ser-132–Arg-144 are extracellular. Residues Gly-145–Leu-165 traverse the membrane as a helical segment. The Cytoplasmic segment spans residues Cys-166–Glu-175. A helical membrane pass occupies residues His-176–Leu-196. Residues Asp-197–Tyr-323 are Extracellular-facing. The residue at position 237 (Ser-237) is a Phosphoserine. Positions Leu-275–Asn-300 are disordered. Residues Ile-324–Val-344 form a helical membrane-spanning segment. Topologically, residues Gln-345–Leu-398 are cytoplasmic. Residues Trp-399–Phe-419 form a helical membrane-spanning segment. The Extracellular segment spans residues Ser-420–Ser-437. The helical transmembrane segment at Val-438 to Val-458 threads the bilayer. The Cytoplasmic portion of the chain corresponds to Ala-459–Thr-469. Residues Leu-470–Gly-490 traverse the membrane as a helical segment. At Arg-491–Thr-514 the chain is on the extracellular side. A helical transmembrane segment spans residues Phe-515–Tyr-535. The Cytoplasmic portion of the chain corresponds to Thr-536 to Leu-547.

The protein resides in the membrane. This is an uncharacterized protein from Saccharomyces cerevisiae (strain ATCC 204508 / S288c) (Baker's yeast).